A 417-amino-acid polypeptide reads, in one-letter code: Serine hydroxymethyltransferase (417 aa).

(6S)-5,6,7,8-tetrahydrofolate contacts are provided by residues Leu-122 and 126 to 128 (GHL). Lys-230 carries the N6-(pyridoxal phosphate)lysine modification. Position 355 to 357 (355 to 357 (SPF)) interacts with (6S)-5,6,7,8-tetrahydrofolate.

Belongs to the SHMT family. As to quaternary structure, homodimer. Requires pyridoxal 5'-phosphate as cofactor.

It localises to the cytoplasm. It carries out the reaction (6R)-5,10-methylene-5,6,7,8-tetrahydrofolate + glycine + H2O = (6S)-5,6,7,8-tetrahydrofolate + L-serine. The protein operates within one-carbon metabolism; tetrahydrofolate interconversion. It functions in the pathway amino-acid biosynthesis; glycine biosynthesis; glycine from L-serine: step 1/1. Its function is as follows. Catalyzes the reversible interconversion of serine and glycine with tetrahydrofolate (THF) serving as the one-carbon carrier. This reaction serves as the major source of one-carbon groups required for the biosynthesis of purines, thymidylate, methionine, and other important biomolecules. Also exhibits THF-independent aldolase activity toward beta-hydroxyamino acids, producing glycine and aldehydes, via a retro-aldol mechanism. This is Serine hydroxymethyltransferase from Francisella philomiragia subsp. philomiragia (strain ATCC 25017 / CCUG 19701 / FSC 153 / O#319-036).